The primary structure comprises 861 residues: MEALGPGPPASLFQPPRRPGLGTVGKPIRLLANHFQVQIPKIDVYHYDVDIKPEKRPRRVNREVVDTMVRHFKMQIFGDRQPGYDGKRNMYTAHPLPIGRDRIDMEVTLPGEGKDQTFKVSVQWVSVVSLQLLLEALAGHLNEVPDDSVQALDVITRHLPSMRYTPVGRSFFSPPEGYYHPLGGGREVWFGFHQSVRPAMWNMMLNIDVSATAFYRAQPIIEFMCEVLDIQNINEQTKPLTDSQRVKFTKEIRGLKVEVTHCGQMKRKYRVCNVTRRPASHQTFPLQLENGQAMECTVAQYFKQKYSLQLKHPHLPCLQVGQEQKHTYLPLEVCNIVAGQRCIKKLTDNQTSTMIKATARSAPDRQEEISRLVKSNSMVGGPDPYLKEFGIVVHNEMTELTGRVLPAPMLQYGGRNKTVATPSQGVWDMRGKQFYAGIEIKVWAVACFAPQKQCREDLLKSFTDQLRKISKDAGMPIQGQPCFCKYAQGADSVEPMFKHLKMTYVGLQLIVVILPGKTPVYAEVKRVGDTLLGMATQCVQVKNVVKTSPQTLSNLCLKMNAKLGGINNVLVPHQRPSVFQQPVIFLGADVTHPPAGDGKKPSIAAVVGSMDGHPSRYCATVRVQTSRQEITQELLYSQEVVQDLTSMARELLIQFYKSTRFKPTRIIYYRGGVSEGQMKQVAWPELIAIRKACISLEEDYRPGITYIVVQKRHHTRLFCADKMERVGKSGNVPAGTTVDSTVTHPSEFDFYLCSHAGIQGTSRPSHYQVLWDDNCFTADELQLLTYQLCHTYVRCTRSVSIPAPAYYARLVAFRARYHLVDKDHDSAEGSHVSGQSNGRDPQALAKAVQIHHDTQHTMYFA.

The PAZ domain occupies 219 to 338; the sequence is PIIEFMCEVL…LPLEVCNIVA (120 aa). Positions 509–820 constitute a Piwi domain; sequence LIVVILPGKT…VAFRARYHLV (312 aa). The segment at 825–846 is disordered; it reads DSAEGSHVSGQSNGRDPQALAK.

This sequence belongs to the argonaute family. Ago subfamily. In terms of assembly, interacts with EIF4B, IMP8, PRMT5, TNRC6A and TNRC6B. Interacts with ZFP36. Ubiquitinated on surface-exposed lysines by a SCF-like E3 ubiquitin-protein ligase complex containing ZSWIM8 during target-directed microRNA degradation (TDMD), a process that mediates degradation of microRNAs (miRNAs). Ubiquitination by the SCF-like E3 ubiquitin-protein ligase complex containing ZSWIM8 leads to its subsequent degradation, thereby exposing miRNAs for degradation. ZSWIM8 recognizes and binds AGO4 when it is engaged with a TDMD target.

Its subcellular location is the cytoplasm. It localises to the P-body. In terms of biological role, required for RNA-mediated gene silencing (RNAi). Binds to short RNAs such as microRNAs (miRNAs) and represses the translation of mRNAs which are complementary to them. Lacks endonuclease activity and does not appear to cleave target mRNAs. The chain is Protein argonaute-4 (Ago4) from Mus musculus (Mouse).